The chain runs to 333 residues: Putative transporter MamV (333 aa).

Helical transmembrane passes span 19–39, 86–106, 111–131, 170–190, and 191–211; these read AWLDMFTALALAVFKTALGVL, FLSANFIGISLMAGAAAMLWY, LGSGHVQVPEVWAVFGALISA, VLAGIVLSILGWVAADHLAAI, and LVSLLVLRIGAVIAWDSIHGL.

The protein belongs to the cation diffusion facilitator (CDF) transporter (TC 2.A.4) family.

Its subcellular location is the cell inner membrane. Its function is as follows. Expression of just the minimal mamAB gene cluster (amb0961 to amb0978), including this gene, is sufficient to form a minimal magnetosome chain with small magnetite particles. In Paramagnetospirillum magneticum (strain ATCC 700264 / AMB-1) (Magnetospirillum magneticum), this protein is Putative transporter MamV.